We begin with the raw amino-acid sequence, 479 residues long: Glutamyl-tRNA(Gln) amidotransferase subunit A (479 aa).

Residues lysine 71 and serine 146 each act as charge relay system in the active site. Residue serine 170 is the Acyl-ester intermediate of the active site.

Belongs to the amidase family. GatA subfamily. Heterotrimer of A, B and C subunits.

The catalysed reaction is L-glutamyl-tRNA(Gln) + L-glutamine + ATP + H2O = L-glutaminyl-tRNA(Gln) + L-glutamate + ADP + phosphate + H(+). Allows the formation of correctly charged Gln-tRNA(Gln) through the transamidation of misacylated Glu-tRNA(Gln) in organisms which lack glutaminyl-tRNA synthetase. The reaction takes place in the presence of glutamine and ATP through an activated gamma-phospho-Glu-tRNA(Gln). This Lactobacillus acidophilus (strain ATCC 700396 / NCK56 / N2 / NCFM) protein is Glutamyl-tRNA(Gln) amidotransferase subunit A.